The chain runs to 206 residues: Large ribosomal subunit protein uL22m (206 aa).

The transit peptide at 1–40 (MAAAVLGQLGALWIHNLRSRGRLAWGVLPQSYVHTSASLD) directs the protein to the mitochondrion.

This sequence belongs to the universal ribosomal protein uL22 family. As to quaternary structure, component of the mitochondrial ribosome large subunit (39S) which comprises a 16S rRNA and about 50 distinct proteins.

The protein localises to the mitochondrion. This Pongo abelii (Sumatran orangutan) protein is Large ribosomal subunit protein uL22m (MRPL22).